The following is an 897-amino-acid chain: Alanine--tRNA ligase (897 aa).

Residues His-591, His-595, Cys-695, and His-699 each coordinate Zn(2+).

The protein belongs to the class-II aminoacyl-tRNA synthetase family. Zn(2+) serves as cofactor.

Its subcellular location is the cytoplasm. The enzyme catalyses tRNA(Ala) + L-alanine + ATP = L-alanyl-tRNA(Ala) + AMP + diphosphate. Catalyzes the attachment of alanine to tRNA(Ala) in a two-step reaction: alanine is first activated by ATP to form Ala-AMP and then transferred to the acceptor end of tRNA(Ala). Also edits incorrectly charged Ser-tRNA(Ala) and Gly-tRNA(Ala) via its editing domain. The chain is Alanine--tRNA ligase from Methanobrevibacter smithii (strain ATCC 35061 / DSM 861 / OCM 144 / PS).